Reading from the N-terminus, the 455-residue chain is UDP-N-acetylmuramoylalanine--D-glutamate ligase (455 aa).

Residue 112 to 118 (GTNGKTT) participates in ATP binding.

This sequence belongs to the MurCDEF family.

The protein localises to the cytoplasm. The enzyme catalyses UDP-N-acetyl-alpha-D-muramoyl-L-alanine + D-glutamate + ATP = UDP-N-acetyl-alpha-D-muramoyl-L-alanyl-D-glutamate + ADP + phosphate + H(+). It participates in cell wall biogenesis; peptidoglycan biosynthesis. Functionally, cell wall formation. Catalyzes the addition of glutamate to the nucleotide precursor UDP-N-acetylmuramoyl-L-alanine (UMA). This Trichormus variabilis (strain ATCC 29413 / PCC 7937) (Anabaena variabilis) protein is UDP-N-acetylmuramoylalanine--D-glutamate ligase.